Consider the following 279-residue polypeptide: Ribonuclease Z (279 aa).

Residues His-64, His-66, Asp-68, His-69, His-134, Asp-191, and His-245 each coordinate Zn(2+). Asp-68 acts as the Proton acceptor in catalysis.

The protein belongs to the RNase Z family. Homodimer. Zn(2+) serves as cofactor.

The enzyme catalyses Endonucleolytic cleavage of RNA, removing extra 3' nucleotides from tRNA precursor, generating 3' termini of tRNAs. A 3'-hydroxy group is left at the tRNA terminus and a 5'-phosphoryl group is left at the trailer molecule.. Zinc phosphodiesterase, which displays some tRNA 3'-processing endonuclease activity. Probably involved in tRNA maturation, by removing a 3'-trailer from precursor tRNA. This Methanopyrus kandleri (strain AV19 / DSM 6324 / JCM 9639 / NBRC 100938) protein is Ribonuclease Z.